Consider the following 315-residue polypeptide: Calumenin (315 aa).

An N-terminal signal peptide occupies residues 1 to 19 (MDLRQFLMCLSLCTAFALS). Residue tyrosine 47 is modified to Phosphotyrosine. A Phosphothreonine modification is found at threonine 65. 6 consecutive EF-hand domains span residues 68–103 (ESKEKLGMIVDKIDTDKDGFVTEGELKSRIKHAQKK), 104–139 (YIYDNVENQWQEFDMNQDGLISWDEYRNVTYGTYLD), 151–186 (PIMVRDERRFKMADQDGDLIATKEEFTAFLHPEEYD), 188–223 (MKDIVLQETMEDIDQNADGFIDLEEYIGDMYSHDGN), 229–264 (WVKTEREQFVEFRDKNRDGKMDKEETKDWILPSDYD), and 265–300 (HAEAEARHLVYESDQDKDGKLTKEEIVDKYDLFVGS). The residue at position 69 (serine 69) is a Phosphoserine. Ca(2+)-binding residues include aspartate 81, aspartate 83, aspartate 85, glutamate 92, aspartate 117, asparagine 119, aspartate 121, and glutamate 128. Asparagine 131 carries an N-linked (GlcNAc...) asparagine glycan. Ca(2+) is bound by residues aspartate 164, aspartate 166, aspartate 168, glutamate 175, aspartate 201, asparagine 203, aspartate 205, glutamate 212, aspartate 242, asparagine 244, aspartate 246, lysine 248, and glutamate 253. Threonine 254 carries the post-translational modification Phosphothreonine. Residues serine 261 and serine 277 each carry the phosphoserine modification. Ca(2+)-binding residues include aspartate 278, aspartate 280, aspartate 282, lysine 284, and glutamate 289. Positions 312-315 (HDEF) match the Prevents secretion from ER motif.

The protein belongs to the CREC family. Binds crotoxin. Interacts with GGCX.

It is found in the endoplasmic reticulum membrane. The protein localises to the golgi apparatus. It localises to the secreted. Its subcellular location is the melanosome. The protein resides in the sarcoplasmic reticulum lumen. Functionally, involved in regulation of vitamin K-dependent carboxylation of multiple N-terminal glutamate residues. Seems to inhibit gamma-carboxylase GGCX. Binds 7 calcium ions with a low affinity. The chain is Calumenin (Calu) from Rattus norvegicus (Rat).